The sequence spans 2148 residues: Polyketide synthase 1 (2148 aa).

Positions 19 to 261 (FIFGDQSSCN…TPLAVHAPYH (243 aa)) are N-terminal acylcarrier protein transacylase domain (SAT). The region spanning 394–829 (ESKIAIIGMS…GGNTALLVED (436 aa)) is the Ketosynthase family 3 (KS3) domain. Catalysis depends on for beta-ketoacyl synthase activity residues C566, H701, and H745. The tract at residues 929–1233 (AFVFSGQGSQ…PSLMRNKDGW (305 aa)) is malonyl-CoA:ACP transacylase (MAT) domain. S1018 serves as the catalytic For acyl/malonyl transferase activity. A product template (PT) domain region spans residues 1310–1624 (TASVHRIVHE…RKVLNTAMPP (315 aa)). An N-terminal hotdog fold region spans residues 1314–1447 (HRIVHESVEK…SSLHFEQPKV (134 aa)). The PKS/mFAS DH domain maps to 1314–1619 (HRIVHESVEK…FQGIPRKVLN (306 aa)). Catalysis depends on H1346, which acts as the Proton acceptor; for dehydratase activity. The segment at 1474 to 1619 (LNSRMSSGVI…FQGIPRKVLN (146 aa)) is C-terminal hotdog fold. Residue D1533 is the Proton donor; for dehydratase activity of the active site. Residues 1619 to 1655 (NTAMPPPKSQNEAPVRSGPAKPAAKPPRSASSEHSGH) form a disordered region. A compositionally biased stretch (low complexity) spans 1634–1650 (RSGPAKPAAKPPRSASS). One can recognise a Carrier 1 domain in the interval 1678–1752 (RNPMLPVFKI…DLAAHLGLDT (75 aa)). At S1712 the chain carries O-(pantetheine 4'-phosphoryl)serine. Composition is skewed to low complexity over residues 1757–1769 (QSSG…GGLS) and 1779–1796 (TSSV…SVSG). A disordered region spans residues 1757–1796 (QSSGQSSSFGGLSPRSDSIGEITSSVTTPPSLSPRSSVSG). A Carrier 2 domain is found at 1793–1870 (SVSGSQCKDV…SFKHMFQQGH (78 aa)). S1830 is subject to O-(pantetheine 4'-phosphoryl)serine. The tract at residues 1882 to 2146 (LKQYRATSTL…ERVAAFIRST (265 aa)) is thioesterase (TE) domain. Residue S1973 is the For thioesterase activity of the active site.

Functionally, polyketide synthase; part of the Pks1 gene cluster that mediates the biosynthesis of an anthraquinone derivative pigment that contributes to conidial pigmentation that provides protection from UV radiation, heat and cold stress. The polyketide synthase Pks1 produces 1-acetyl-2,4,6,8-tetrahydroxy-9,10-anthraquinone though condensation of acetyl-CoA with malonyl-CoA. The dehydratase EthD and the laccase Mlac1 further convert the anthraquinone derivative into the final conidial pigment. In Metarhizium anisopliae (strain ARSEF 549), this protein is Polyketide synthase 1.